Here is a 511-residue protein sequence, read N- to C-terminus: 2'-acyl-2-O-sulfo-trehalose (hydroxy)phthioceranyltransferase PapA1 (511 aa).

This sequence belongs to the PapA acyltransferase family.

The catalysed reaction is a (hydroxy)phthioceranyl-[(hydroxy)phthioceranic acid synthase] + 2'-palmitoyl/stearoyl-2-O-sulfo-alpha,alpha-trehalose = a 3'-(hydroxy)phthioceranyl-2'-palmitoyl/stearoyl-2-O-sulfo-alpha,alpha-trehalose + holo-[(hydroxy)phthioceranic acid synthase].. Its function is as follows. Required for the biosynthesis of sulfolipid-1 (SL-1), a major mycobacterial cell wall lipid. Catalyzes the acylation of trehalose-2-sulfate-2'-palmitate (SL659) by adding the (hydroxy)phthioceranoyl group at the 3'-position to yield the diacylated intermediate 2-palmitoyl-3-(C43)-phthioceranyl-alpha, alpha'-D-trehalose-2'-sulfate (SL1278). In Mycobacterium tuberculosis (strain CDC 1551 / Oshkosh), this protein is 2'-acyl-2-O-sulfo-trehalose (hydroxy)phthioceranyltransferase PapA1 (papA1).